A 1120-amino-acid polypeptide reads, in one-letter code: Terminal uridylyltransferase 1 (1120 aa).

Disordered regions lie at residues 1–156 (MSKY…SAVE) and 196–221 (AALINGDPGPLSSAVSSSSSGSPHTP). Residues 7–16 (LFNQGTKDGT) are compositionally biased toward polar residues. The span at 17–59 (NASSGSEANSANITSSSAPASSTNTSSPTSSESAVVSPPASTS) shows a compositional bias: low complexity. Residues 60 to 70 (PRRRLIHRRHG) are compositionally biased toward basic residues. Basic and acidic residues predominate over residues 90 to 103 (NEEKHENFISDSVH). Polar residues predominate over residues 118 to 128 (LTTSGSETVMS). 2 stretches are compositionally biased toward low complexity: residues 134–154 (AFEAPSPPTASASPPLESTSA) and 207–217 (SSAVSSSSSGS). The C2H2-type; atypical zinc finger occupies 222–253 (PRLFTCDMCLQYVSTSYEALEQHALDQHGDAL). 4 residues coordinate Zn(2+): Cys-227, Cys-230, His-244, and His-249. Residues Ser-330 and 341–344 (SDID) contribute to the UTP site. Residues Asp-342 and Asp-344 each coordinate Mg(2+). Arg-390 lines the RNA pocket. Asp-548 contacts Mg(2+). UTP-binding positions include 555 to 559 (GIRNS), Lys-580, Lys-584, and 598 to 599 (SY). The region spanning 659 to 697 (GELLLGFFYYYAFEFDWVNHVVSLNRPGITTKASLGWDV) is the PAP-associated domain. Positions 750–1120 (GMMASSASAA…ARRVLRLLFR (371 aa)) are important for catalytic activity and RNA binding. A Nucleotide recognition motif (NRM) motif is present at residues 773–782 (IEDPYEENLN). The involved in oligomerization stretch occupies residues 800–900 (YRGLLSLLKD…LLSDLEAAFL (101 aa)). The interval 1047–1076 (PSTTTQGEDPLASGTCEQGGVSPSLPTGAP) is disordered.

This sequence belongs to the DNA polymerase type-B-like family. In terms of assembly, homotetramer. Part of a 700kDa complex. Interacts with p45 and p50 RNA ligases. Requires Mg(2+) as cofactor. Mn(2+) is required as a cofactor.

The protein localises to the mitochondrion. The enzyme catalyses RNA(n) + UTP = RNA(n)-3'-uridine ribonucleotide + diphosphate. With respect to regulation, zinc-binding is required for catalytic activity. Its function is as follows. Terminal uridylyltransferase which is involved in the post-transcriptional editing of mitochondrial RNA, a process involving the addition and deletion of uridine (U) nucleotides in the pre-mRNA. Specifically, catalyzes the addition of Us to the 3'-hydroxyl group of guided RNA (gRNA), with a preference for RNAs terminating in 6 Us, but also can add Us to RNAs terminating in 6 adenines (A), 6 cytosines (C), or 6 guanines (G). Can mediate RNA-independent UTP polymerization in vitro. Can mediate pyrophosphate-dependent degradation of synthetic RNA ending with U residues in vitro. This chain is Terminal uridylyltransferase 1, found in Leishmania tarentolae (Sauroleishmania tarentolae).